We begin with the raw amino-acid sequence, 85 residues long: MKQYIFFLALIVLVSTFAEAGKKTEILDKVKKVFSKGIAGVADLNNMSELGCPFIEKWCEDHCESKKQVGKCENFDCSCVKLGGK.

The first 20 residues, 1-20, serve as a signal peptide directing secretion; it reads MKQYIFFLALIVLVSTFAEA. The propeptide occupies 21–37; that stretch reads GKKTEILDKVKKVFSKG. The BetaSPN-type CS-alpha/beta domain maps to 49–85; that stretch reads ELGCPFIEKWCEDHCESKKQVGKCENFDCSCVKLGGK. Disulfide bonds link cysteine 52/cysteine 72, cysteine 59/cysteine 77, and cysteine 63/cysteine 79.

Belongs to the long chain scorpion toxin family. Class 2 subfamily. Expressed by the venom gland.

It localises to the secreted. Its function is as follows. Has a very weak effect to block voltage-gated potassium channel Kv1.1/KCNA1. The chain is Neurotoxin beta-KTx 17 from Lychas mucronatus (Chinese swimming scorpion).